The primary structure comprises 108 residues: Tetrahydromethanopterin S-methyltransferase subunit B (108 aa).

The chain crosses the membrane as a helical span at residues 80-100; the sequence is AFYGIVVGLAFSGLLALIIFI.

It belongs to the MtrB family. As to quaternary structure, the complex is composed of 8 subunits; MtrA, MtrB, MtrC, MtrD, MtrE, MtrF, MtrG and MtrH.

Its subcellular location is the cell membrane. It catalyses the reaction 5-methyl-5,6,7,8-tetrahydromethanopterin + coenzyme M + 2 Na(+)(in) = 5,6,7,8-tetrahydromethanopterin + methyl-coenzyme M + 2 Na(+)(out). It functions in the pathway one-carbon metabolism; methanogenesis from CO(2); methyl-coenzyme M from 5,10-methylene-5,6,7,8-tetrahydromethanopterin: step 2/2. Its function is as follows. Part of a complex that catalyzes the formation of methyl-coenzyme M and tetrahydromethanopterin from coenzyme M and methyl-tetrahydromethanopterin. This is an energy-conserving, sodium-ion translocating step. The chain is Tetrahydromethanopterin S-methyltransferase subunit B from Methanosarcina acetivorans (strain ATCC 35395 / DSM 2834 / JCM 12185 / C2A).